We begin with the raw amino-acid sequence, 183 residues long: CyanoP (183 aa).

The first 19 residues, 1–19, serve as a signal peptide directing secretion; that stretch reads MLQRFFATALAIFVVLLGG. Cys-20 carries N-palmitoyl cysteine lipidation. A lipid anchor (S-diacylglycerol cysteine) is attached at Cys-20. Zn(2+) contacts are provided by Asp-31, Asp-34, Asp-54, His-58, Thr-63, Glu-87, Asp-91, His-142, Glu-163, and Glu-164.

Belongs to the PsbP family. CyanoP subfamily. As to quaternary structure, monomer. Present in very small amounts in PSII. The cofactor is Zn(2+).

Its subcellular location is the cellular thylakoid membrane. Its function is as follows. Plays a role in the early stages of photosystem II (PSII) assembly; binds to D2 (psbD) and may facilitate its incorporation into PSII. Present in less than 1% of PSII preparations. This Thermosynechococcus vestitus (strain NIES-2133 / IAM M-273 / BP-1) protein is CyanoP.